We begin with the raw amino-acid sequence, 198 residues long: Myc target protein 1 homolog (198 aa).

The Bipartite nuclear localization signal motif lies at Arg52–Arg72. 2 disordered regions span residues Ser58–Ser83 and Asn172–Ser198. A compositionally biased stretch (polar residues) spans Asn172–Thr181.

It belongs to the MYCT1 family.

It is found in the nucleus. Functionally, may regulate certain MYC target genes, MYC seems to be a direct upstream transcriptional activator. This chain is Myc target protein 1 homolog (myct1), found in Xenopus tropicalis (Western clawed frog).